The following is a 130-amino-acid chain: DNA-directed RNA polymerase subunit omega (130 aa).

The disordered stretch occupies residues 108–130 (TEEELLKGLEGLAPPEEQPEEDE).

It belongs to the RNA polymerase subunit omega family. As to quaternary structure, the RNAP catalytic core consists of 2 alpha, 1 beta, 1 beta' and 1 omega subunit. When a sigma factor is associated with the core the holoenzyme is formed, which can initiate transcription.

The enzyme catalyses RNA(n) + a ribonucleoside 5'-triphosphate = RNA(n+1) + diphosphate. In terms of biological role, promotes RNA polymerase assembly. Latches the N- and C-terminal regions of the beta' subunit thereby facilitating its interaction with the beta and alpha subunits. The chain is DNA-directed RNA polymerase subunit omega from Rhodopseudomonas palustris (strain ATCC BAA-98 / CGA009).